A 255-amino-acid polypeptide reads, in one-letter code: tRNA pseudouridine synthase B (255 aa).

D52 (nucleophile) is an active-site residue. Residues Y80, Y183, and L204 each coordinate substrate.

This sequence belongs to the pseudouridine synthase TruB family. Type 1 subfamily.

It catalyses the reaction uridine(55) in tRNA = pseudouridine(55) in tRNA. Its function is as follows. Responsible for synthesis of pseudouridine from uracil-55 in the psi GC loop of transfer RNAs. This chain is tRNA pseudouridine synthase B, found in Blochmanniella floridana.